A 493-amino-acid chain; its full sequence is Galactose-1-phosphate uridylyltransferase (493 aa).

It belongs to the galactose-1-phosphate uridylyltransferase type 2 family.

The protein resides in the cytoplasm. The enzyme catalyses alpha-D-galactose 1-phosphate + UDP-alpha-D-glucose = alpha-D-glucose 1-phosphate + UDP-alpha-D-galactose. Its pathway is carbohydrate metabolism; galactose metabolism. This Lactococcus lactis subsp. cremoris (strain MG1363) protein is Galactose-1-phosphate uridylyltransferase.